The following is an 885-amino-acid chain: Conidiophore development regulator abaA (885 aa).

Residues 1-20 (MSSLFQPRPVLSSQRYSQSP) show a composition bias toward polar residues. Positions 1–25 (MSSLFQPRPVLSSQRYSQSPDYVDT) are disordered. Positions 124–217 (QKDKGGVWRR…QVVKKFFEDL (94 aa)) form a DNA-binding region, TEA. 2 disordered regions span residues 502–539 (KEKR…WTRR) and 817–885 (APGS…TAGW). Composition is skewed to basic and acidic residues over residues 508–521 (YADG…ERAG) and 831–840 (VESHAGDHHG).

The protein belongs to the TEC1 family.

The protein localises to the nucleus. Its function is as follows. BrlA, abaA and wetA are pivotal regulators of conidiophore development and conidium maturation. They act individually and together to regulate their own expression and that of numerous other sporulation-specific genes. BrlA, abaA and wetA act together to positively regulate the expression of the Pks1 gene cluster that mediates the biosynthesis of an anthraquinone derivative pigment that contributes to conidial pigmentation that provides protection from UV radiation, heat and cold stress. The protein is Conidiophore development regulator abaA of Metarhizium robertsii (strain ARSEF 23 / ATCC MYA-3075) (Metarhizium anisopliae (strain ARSEF 23)).